The sequence spans 483 residues: MAYIEGNTGKWEYVIGLEIHAQISSKSKLFSGSSTIFAANPNSQVSYIDAAMPGMLPVLNKHCVHQAIKTGLGLKAKINKYSVFDRKNYFYADLPQGYQISQFYYPIVQNGTMEIPTSTGDLKTIRINRLHLEQDAGKSMHDQSPHYSFIDLNRAGIGLMEIVTEPDISSPEEAAEFVKKLRNLLRYIGSCDGDMEKGSMRCDANISVRRSGEPLGTRCEIKNINSIRNIIKAIEFEAKRQVDLLESGEEIIQETRLFNADSGETRTMRLKEEALDYRYFPDPDLLPLVISDELINELKANLPELPDQKIEKYTKEFSLSKYDAEVIVADESVAEYFEKAANECNPKMLTNWLTSELFGQLNKASIGINECKITPSNFAKLVKLIENDTISGKIAKTVFEIMFETGKAPDKIIEEKGLVQVSDNNVLNTVIDEVIAENPESVEGYRSGKDKLFGFFVGQVMKKTDGKANPTLVNQLLKEKLSS.

This sequence belongs to the GatB/GatE family. GatB subfamily. Heterotrimer of A, B and C subunits.

The enzyme catalyses L-glutamyl-tRNA(Gln) + L-glutamine + ATP + H2O = L-glutaminyl-tRNA(Gln) + L-glutamate + ADP + phosphate + H(+). It catalyses the reaction L-aspartyl-tRNA(Asn) + L-glutamine + ATP + H2O = L-asparaginyl-tRNA(Asn) + L-glutamate + ADP + phosphate + 2 H(+). Functionally, allows the formation of correctly charged Asn-tRNA(Asn) or Gln-tRNA(Gln) through the transamidation of misacylated Asp-tRNA(Asn) or Glu-tRNA(Gln) in organisms which lack either or both of asparaginyl-tRNA or glutaminyl-tRNA synthetases. The reaction takes place in the presence of glutamine and ATP through an activated phospho-Asp-tRNA(Asn) or phospho-Glu-tRNA(Gln). This Rickettsia rickettsii (strain Sheila Smith) protein is Aspartyl/glutamyl-tRNA(Asn/Gln) amidotransferase subunit B.